The chain runs to 219 residues: Small ribosomal subunit protein uS5 (219 aa).

The region spanning 52 to 115 is the S5 DRBM domain; it reads LDDEVLDINM…DVAKLNLISV (64 aa). Residues 196-219 form a disordered region; that stretch reads LRNASQSRTPRRAAAKQREQEVSE.

Belongs to the universal ribosomal protein uS5 family. In terms of assembly, part of the 30S ribosomal subunit. Contacts protein S4.

With S4 and S12 plays an important role in translational accuracy. This Haloquadratum walsbyi (strain DSM 16790 / HBSQ001) protein is Small ribosomal subunit protein uS5.